We begin with the raw amino-acid sequence, 67 residues long: Large ribosomal subunit protein bL35 (67 aa).

Belongs to the bacterial ribosomal protein bL35 family.

The polypeptide is Large ribosomal subunit protein bL35 (Acidovorax ebreus (strain TPSY) (Diaphorobacter sp. (strain TPSY))).